The sequence spans 220 residues: Vesicle-associated membrane protein 7 (220 aa).

Residue Ala-2 is modified to N-acetylalanine. At 2–188 (AILFAVVARG…ARAMCMKNLK (187 aa)) the chain is on the cytoplasmic side. One can recognise a Longin domain in the interval 7–110 (VVARGTTILA…AMNSEFSSVL (104 aa)). One can recognise a v-SNARE coiled-coil homology domain in the interval 125 to 185 (KVMETQAQVD…RNLARAMCMK (61 aa)). 2 positions are modified to phosphoserine: Ser-167 and Ser-168. Residues 189 to 209 (LTIIIIIVSIVFIYIIVSPLC) traverse the membrane as a helical; Anchor for type IV membrane protein segment. Residues 210 to 220 (GGFTWPSCVKK) lie on the Vesicular side of the membrane.

It belongs to the synaptobrevin family. Component of the SNARE complex composed of STX4, SNAP23 and VAMP7 that binds SYT7 during lysosomal exocytosis. Component of the SNARE complex composed of STX7, STX8, VAMP7 and VTI1B that is required for heterotypic fusion of late endosomes with lysosomes in liver cells. May interact with STX17. Interacts with PICALM. Interacts with RAB21.

Its subcellular location is the cytoplasmic vesicle. It localises to the secretory vesicle membrane. The protein resides in the golgi apparatus. It is found in the trans-Golgi network membrane. The protein localises to the late endosome membrane. Its subcellular location is the lysosome membrane. It localises to the endoplasmic reticulum membrane. The protein resides in the phagosome membrane. It is found in the synapse. The protein localises to the synaptosome. Involved in the targeting and/or fusion of transport vesicles to their target membrane during transport of proteins from the early endosome to the lysosome. Required for heterotypic fusion of late endosomes with lysosomes and homotypic lysosomal fusion. Required for calcium regulated lysosomal exocytosis. Involved in the export of chylomicrons from the endoplasmic reticulum to the cis Golgi. Required for exocytosis of mediators during eosinophil and neutrophil degranulation, and target cell killing by natural killer cells. Required for focal exocytosis of late endocytic vesicles during phagosome formation. This Pongo abelii (Sumatran orangutan) protein is Vesicle-associated membrane protein 7 (VAMP7).